Consider the following 398-residue polypeptide: Lysophosphatidylserine lipase ABHD12 (398 aa).

Residues 1-16 (MRKRTEPVALEHERRT) are compositionally biased toward basic and acidic residues. Positions 1-24 (MRKRTEPVALEHERRTASGSPSAG) are disordered. Topologically, residues 1–74 (MRKRTEPVAL…RKGLCFRLRK (74 aa)) are cytoplasmic. Residues 75 to 95 (ILFFVLGLYVAIPFLIKLCPG) traverse the membrane as a helical segment. Over 96-398 (IQAKLIFLNF…LGKSEPGRQH (303 aa)) the chain is Extracellular. Asn-123 carries an N-linked (GlcNAc...) asparagine glycan. Ser-246 serves as the catalytic Nucleophile. Residues Asp-333 and His-372 each act as charge relay system in the active site.

Belongs to the serine esterase family.

It is found in the endoplasmic reticulum membrane. The enzyme catalyses 1-(9Z-octadecenoyl)-sn-glycero-3-phospho-L-serine + H2O = sn-glycero-3-phospho-L-serine + (9Z)-octadecenoate + H(+). It catalyses the reaction 1-(9Z-octadecenoyl)-sn-glycero-3-phospho-(1'-sn-glycerol) + H2O = sn-glycero-3-phospho-(1'-sn-glycerol) + (9Z)-octadecenoate + H(+). The catalysed reaction is 1-(9Z-octadecenoyl)-sn-glycero-3-phospho-(1D-myo-inositol) + H2O = sn-glycero-3-phospho-1D-myo-inositol + (9Z)-octadecenoate + H(+). It carries out the reaction 1-(9Z-octadecenoyl)-sn-glycero-3-phosphoethanolamine + H2O = sn-glycero-3-phosphoethanolamine + (9Z)-octadecenoate + H(+). The enzyme catalyses 1-(9Z-octadecenoyl)-sn-glycero-3-phosphocholine + H2O = 1-(9Z-octadecenoyl)-sn-glycerol + phosphocholine + H(+). It catalyses the reaction 2-(9Z-octadecenoyl)-glycerol + H2O = glycerol + (9Z)-octadecenoate + H(+). The catalysed reaction is 1-hexadecanoyl-sn-glycero-3-phospho-L-serine + H2O = sn-glycero-3-phospho-L-serine + hexadecanoate + H(+). It carries out the reaction 2-(5Z,8Z,11Z,14Z-eicosatetraenoyl)-glycerol + H2O = glycerol + (5Z,8Z,11Z,14Z)-eicosatetraenoate + H(+). The enzyme catalyses Hydrolyzes glycerol monoesters of long-chain fatty acids.. It catalyses the reaction 1-decanoylglycerol + H2O = decanoate + glycerol + H(+). The catalysed reaction is 1-dodecanoylglycerol + H2O = dodecanoate + glycerol + H(+). It carries out the reaction 1-tetradecanoylglycerol + H2O = tetradecanoate + glycerol + H(+). The enzyme catalyses 2-hexadecanoylglycerol + H2O = glycerol + hexadecanoate + H(+). It catalyses the reaction 1-(9Z-octadecenoyl)-glycerol + H2O = glycerol + (9Z)-octadecenoate + H(+). The catalysed reaction is 2-(9Z,12Z-octadecadienoyl)-glycerol + H2O = (9Z,12Z)-octadecadienoate + glycerol + H(+). It carries out the reaction 1-(5Z,8Z,11Z,14Z-eicosatetraenoyl)-glycerol + H2O = glycerol + (5Z,8Z,11Z,14Z)-eicosatetraenoate + H(+). The enzyme catalyses 1-(9Z,12Z-octadecadienoyl)-glycerol + H2O = (9Z,12Z)-octadecadienoate + glycerol + H(+). It catalyses the reaction 1-hexadecanoylglycerol + H2O = glycerol + hexadecanoate + H(+). The catalysed reaction is 1-octadecanoylglycerol + H2O = octadecanoate + glycerol + H(+). It carries out the reaction 1-octadecanoyl-2-(9,10-epoxyoctadecanoyl)-sn-glycero-3-phospho-L-serine + H2O = 9,10-epoxyoctadecanoate + 1-octadecanoyl-sn-glycero-3-phosphoserine + H(+). The enzyme catalyses 1-octadecanoyl-2-(10-hydroxyoctadecanoyl)-sn-glycero-3-phospho-L-serine + H2O = 1-octadecanoyl-sn-glycero-3-phosphoserine + 10-hydroxyoctadecanoate + H(+). It catalyses the reaction 1-hexadecanoyl-2-(10-hydroxyoctadecanoyl)-sn-glycero-3-phospho-L-serine + H2O = 10-hydroxyoctadecanoate + 1-hexadecanoyl-sn-glycero-3-phospho-L-serine + H(+). Lysophosphatidylserine (LPS) lipase that mediates the hydrolysis of lysophosphatidylserine, a class of signaling lipids that regulates immunological and neurological processes. Represents a major lysophosphatidylserine lipase in the brain, thereby playing a key role in the central nervous system. Also able to hydrolyze oxidized phosphatidylserine; oxidized phosphatidylserine is produced in response to severe inflammatory stress and constitutes a proapoptotic 'eat me' signal. Also has monoacylglycerol (MAG) lipase activity: hydrolyzes 2-arachidonoylglycerol (2-AG), thereby acting as a regulator of endocannabinoid signaling pathways. Has a strong preference for very-long-chain lipid substrates; substrate specificity is likely due to improved catalysis and not improved substrate binding. In Bos taurus (Bovine), this protein is Lysophosphatidylserine lipase ABHD12.